Reading from the N-terminus, the 308-residue chain is Ribosomal RNA small subunit methyltransferase H (308 aa).

Residues 32–34 (GGH), Asp52, Phe78, Asp100, and Gln107 each bind S-adenosyl-L-methionine.

The protein belongs to the methyltransferase superfamily. RsmH family.

The protein resides in the cytoplasm. It catalyses the reaction cytidine(1402) in 16S rRNA + S-adenosyl-L-methionine = N(4)-methylcytidine(1402) in 16S rRNA + S-adenosyl-L-homocysteine + H(+). Functionally, specifically methylates the N4 position of cytidine in position 1402 (C1402) of 16S rRNA. The polypeptide is Ribosomal RNA small subunit methyltransferase H (Legionella pneumophila (strain Corby)).